Reading from the N-terminus, the 946-residue chain is Nonribosomal peptide synthetase pngA (946 aa).

An adenylation (A) domain region spans residues 32 to 450 (AIASREPTRY…AGREKDSIIV (419 aa)). One can recognise a Carrier domain in the interval 580-659 (QPRSGLEQSL…TLSDALKQHA (80 aa)). An O-(pantetheine 4'-phosphoryl)serine modification is found at serine 618. The interval 681-933 (PIWLVHPVGG…ILDAENIFSF (253 aa)) is thioesterase (TE) domain.

It belongs to the NRP synthetase family.

It catalyses the reaction 2 3-phenylpyruvate + H(+) = phenguignardate + H2O. In terms of biological role, nonribosomal peptide synthetase that mediates the biosynthesis of phenguignardic acid. PngA alone is sufficient for phenguignardic acid synthesis. PngA first activates phenylpyruvic acid (PPA) through its A domain to AMP-PPA. The PPA unit is then loaded to the T domain and eventually transferred to the TE domain. Another PPA unit is then loaded onto the T domain. The TE domain likely promotes the enolate formation on the attached unit, followed by a nucleophilic attack on the carbonyl to yield an ether linkage between the two units. Finally, the TE domain probably catalyzes a similar reaction to give the cyclized dioxolanone core and releases phenguignardic acid. The protein is Nonribosomal peptide synthetase pngA of Aspergillus terreus (strain NIH 2624 / FGSC A1156).